A 331-amino-acid chain; its full sequence is Ketol-acid reductoisomerase (NADP(+)) (331 aa).

One can recognise a KARI N-terminal Rossmann domain in the interval 2–182; sequence AKLFYDSDAD…GGTRAGILET (181 aa). NADP(+) contacts are provided by residues 25–28, Ser-51, Ser-53, and 83–86; these read YGSQ and DEFQ. Residue His-108 is part of the active site. Residue Gly-134 participates in NADP(+) binding. The 146-residue stretch at 183–328 folds into the KARI C-terminal knotted domain; the sequence is NFKEETETDL…KTLRSMFSWL (146 aa). Positions 191, 195, 227, and 231 each coordinate Mg(2+). Ser-252 contributes to the substrate binding site.

The protein belongs to the ketol-acid reductoisomerase family. It depends on Mg(2+) as a cofactor.

It catalyses the reaction (2R)-2,3-dihydroxy-3-methylbutanoate + NADP(+) = (2S)-2-acetolactate + NADPH + H(+). It carries out the reaction (2R,3R)-2,3-dihydroxy-3-methylpentanoate + NADP(+) = (S)-2-ethyl-2-hydroxy-3-oxobutanoate + NADPH + H(+). Its pathway is amino-acid biosynthesis; L-isoleucine biosynthesis; L-isoleucine from 2-oxobutanoate: step 2/4. It participates in amino-acid biosynthesis; L-valine biosynthesis; L-valine from pyruvate: step 2/4. Involved in the biosynthesis of branched-chain amino acids (BCAA). Catalyzes an alkyl-migration followed by a ketol-acid reduction of (S)-2-acetolactate (S2AL) to yield (R)-2,3-dihydroxy-isovalerate. In the isomerase reaction, S2AL is rearranged via a Mg-dependent methyl migration to produce 3-hydroxy-3-methyl-2-ketobutyrate (HMKB). In the reductase reaction, this 2-ketoacid undergoes a metal-dependent reduction by NADPH to yield (R)-2,3-dihydroxy-isovalerate. In Prochlorococcus marinus (strain NATL2A), this protein is Ketol-acid reductoisomerase (NADP(+)).